The sequence spans 587 residues: L-ornithine N(5)-monooxygenase (587 aa).

Residues 53–61 (EKHTSFQWH) and Gln72 contribute to the FAD site. Lys77 lines the substrate pocket. 235-238 (GGQS) is an NADP(+) binding site. Substrate contacts are provided by residues 282-285 (NEVF) and Asn312. 312 to 314 (NYS) contacts NADP(+). The disordered stretch occupies residues 488-511 (DNSAASGVSGASTPLTSPSEEEGK). Positions 491–505 (AASGVSGASTPLTSP) are enriched in polar residues. FAD is bound at residue 567–569 (TLL). Residue Ser570 participates in substrate binding.

This sequence belongs to the lysine N(6)-hydroxylase/L-ornithine N(5)-oxygenase family. Homotetramer. FAD serves as cofactor.

The catalysed reaction is L-ornithine + NADPH + O2 = N(5)-hydroxy-L-ornithine + NADP(+) + H2O. The enzyme catalyses L-ornithine + NADH + O2 = N(5)-hydroxy-L-ornithine + NAD(+) + H2O. It functions in the pathway siderophore biosynthesis; ferrichrome biosynthesis. Functionally, L-ornithine N(5)-monooxygenase; part of the siderophore biosynthetic pathway. Omphalotus olearius produces ferrichrome A, but no other siderophore has been detected. Ferrichrome A consists of a hexapeptide ring made up of one glycine, two serine, and three N(5)-hydroxyornithine amino acid residues, the latter acylated by trans-(alpha-methyl)-glutaconic acid residues. The biosynthesis of ferrichrome A depends on the hydroxylation of ornithine to N(5)-hydroxyornithine, catalyzed by the monooxygenase omo1. The second step, the acylation of N(5)-hydroxy-L-ornithine is probably catalyzed by the N-acyltransferase ato1. Finally, assembly of ferrichrome A is catalyzed by the nonribosomal peptide synthase (NRPS) fso1. The chain is L-ornithine N(5)-monooxygenase from Omphalotus olearius (Jack o'lantern).